A 339-amino-acid chain; its full sequence is DNA-directed RNA polymerase subunit alpha (339 aa).

The interval Met1–Glu233 is alpha N-terminal domain (alpha-NTD). Positions Lys264–Phe339 are alpha C-terminal domain (alpha-CTD).

This sequence belongs to the RNA polymerase alpha chain family. As to quaternary structure, in plastids the minimal PEP RNA polymerase catalytic core is composed of four subunits: alpha, beta, beta', and beta''. When a (nuclear-encoded) sigma factor is associated with the core the holoenzyme is formed, which can initiate transcription.

It localises to the plastid. Its subcellular location is the chloroplast. It carries out the reaction RNA(n) + a ribonucleoside 5'-triphosphate = RNA(n+1) + diphosphate. Functionally, DNA-dependent RNA polymerase catalyzes the transcription of DNA into RNA using the four ribonucleoside triphosphates as substrates. This is DNA-directed RNA polymerase subunit alpha from Elymus hystrix (Eastern bottlebrush grass).